The sequence spans 274 residues: 2,3,4,5-tetrahydropyridine-2,6-dicarboxylate N-succinyltransferase (274 aa).

The substrate site is built by arginine 103 and aspartate 140.

The protein belongs to the transferase hexapeptide repeat family. In terms of assembly, homotrimer.

It is found in the cytoplasm. The catalysed reaction is (S)-2,3,4,5-tetrahydrodipicolinate + succinyl-CoA + H2O = (S)-2-succinylamino-6-oxoheptanedioate + CoA. It participates in amino-acid biosynthesis; L-lysine biosynthesis via DAP pathway; LL-2,6-diaminopimelate from (S)-tetrahydrodipicolinate (succinylase route): step 1/3. This is 2,3,4,5-tetrahydropyridine-2,6-dicarboxylate N-succinyltransferase from Pasteurella multocida (strain Pm70).